The chain runs to 345 residues: Putative membrane protein ORF59 (345 aa).

Transmembrane regions (helical) follow at residues 46–63 (LVFAYVTLVLLYVIMMLI), 101–118 (IVFVALGVNFLLVILVFL), 147–165 (IFGIMSFIFVFIITVFSIL), and 265–286 (VVPVILLVMFILYMFLHLWMVI).

It is found in the membrane. This chain is Putative membrane protein ORF59 (ORF59), found in Ictalurid herpesvirus 1 (strain Auburn) (IcHV-1).